Consider the following 322-residue polypeptide: Phosphatidylglycerol--prolipoprotein diacylglyceryl transferase (322 aa).

The next 3 membrane-spanning stretches (helical) occupy residues 23–43, 53–73, and 97–117; these read VYPI…AFFW, FFAL…LWFV, and GLSI…YIYF. R143 is an a 1,2-diacyl-sn-glycero-3-phospho-(1'-sn-glycerol) binding site. 2 consecutive transmembrane segments (helical) span residues 191 to 211 and 250 to 270; these read PLFL…VWII and LAAM…EIWA.

The protein belongs to the Lgt family.

The protein localises to the cell membrane. It carries out the reaction L-cysteinyl-[prolipoprotein] + a 1,2-diacyl-sn-glycero-3-phospho-(1'-sn-glycerol) = an S-1,2-diacyl-sn-glyceryl-L-cysteinyl-[prolipoprotein] + sn-glycerol 1-phosphate + H(+). It participates in protein modification; lipoprotein biosynthesis (diacylglyceryl transfer). Functionally, catalyzes the transfer of the diacylglyceryl group from phosphatidylglycerol to the sulfhydryl group of the N-terminal cysteine of a prolipoprotein, the first step in the formation of mature lipoproteins. The chain is Phosphatidylglycerol--prolipoprotein diacylglyceryl transferase from Mycoplasmopsis pulmonis (strain UAB CTIP) (Mycoplasma pulmonis).